The chain runs to 671 residues: UvrABC system protein C (671 aa).

In terms of domain architecture, GIY-YIG spans 16–95; sequence TTPGVYRFRD…IKEFKPRFNV (80 aa). Residues 207–242 enclose the UVR domain; it reads KRFISRLEKDMAAAVAELDYERAAGLRDDIIALRKV.

This sequence belongs to the UvrC family. As to quaternary structure, interacts with UvrB in an incision complex.

The protein localises to the cytoplasm. The UvrABC repair system catalyzes the recognition and processing of DNA lesions. UvrC both incises the 5' and 3' sides of the lesion. The N-terminal half is responsible for the 3' incision and the C-terminal half is responsible for the 5' incision. The polypeptide is UvrABC system protein C (Paenarthrobacter aurescens (strain TC1)).